The following is a 272-amino-acid chain: D-aminoacyl-tRNA deacylase (272 aa).

Belongs to the DtdA deacylase family. As to quaternary structure, monomer. The cofactor is Zn(2+).

The catalysed reaction is a D-aminoacyl-tRNA + H2O = a tRNA + a D-alpha-amino acid + H(+). It carries out the reaction glycyl-tRNA(Ala) + H2O = tRNA(Ala) + glycine + H(+). D-aminoacyl-tRNA deacylase with broad substrate specificity. By recycling D-aminoacyl-tRNA to D-amino acids and free tRNA molecules, this enzyme counteracts the toxicity associated with the formation of D-aminoacyl-tRNA entities in vivo. The polypeptide is D-aminoacyl-tRNA deacylase (Desulfurococcus amylolyticus (strain DSM 18924 / JCM 16383 / VKM B-2413 / 1221n) (Desulfurococcus kamchatkensis)).